A 200-amino-acid chain; its full sequence is Holliday junction branch migration complex subunit RuvA (200 aa).

Residues 1–63 (MYAYVKGKLT…EDAQLLYGFS (63 aa)) are domain I. The interval 64–142 (SEEEKDMFLS…ITEEDSDSLL (79 aa)) is domain II. The segment at 143–149 (QVDATST) is flexible linker. A domain III region spans residues 150 to 200 (VQDQFVQEAMLALEALGYSKRELAKVEKTLNKNKYDSVDEAVKAGLQLVVS).

Belongs to the RuvA family. Homotetramer. Forms an RuvA(8)-RuvB(12)-Holliday junction (HJ) complex. HJ DNA is sandwiched between 2 RuvA tetramers; dsDNA enters through RuvA and exits via RuvB. An RuvB hexamer assembles on each DNA strand where it exits the tetramer. Each RuvB hexamer is contacted by two RuvA subunits (via domain III) on 2 adjacent RuvB subunits; this complex drives branch migration. In the full resolvosome a probable DNA-RuvA(4)-RuvB(12)-RuvC(2) complex forms which resolves the HJ.

Its subcellular location is the cytoplasm. The RuvA-RuvB-RuvC complex processes Holliday junction (HJ) DNA during genetic recombination and DNA repair, while the RuvA-RuvB complex plays an important role in the rescue of blocked DNA replication forks via replication fork reversal (RFR). RuvA specifically binds to HJ cruciform DNA, conferring on it an open structure. The RuvB hexamer acts as an ATP-dependent pump, pulling dsDNA into and through the RuvAB complex. HJ branch migration allows RuvC to scan DNA until it finds its consensus sequence, where it cleaves and resolves the cruciform DNA. In Staphylococcus aureus (strain USA300), this protein is Holliday junction branch migration complex subunit RuvA.